A 157-amino-acid polypeptide reads, in one-letter code: MSLIPSIFGGRRTNVFDPFSLDVFDPFEGFLTPSGLANAPAMDVAAFTNAKVDWRETPEAHVFKADLPGLRKEEVKVEVEDGNILQISGERSNENEEKNDKWHRVERSSGKFTRRFRLPENAKMEEIKASMENGVLSVTVPKVPEKKPEVKSIDISG.

The sHSP domain occupies 43–157 (DVAAFTNAKV…PEVKSIDISG (115 aa)).

The protein belongs to the small heat shock protein (HSP20) family. As to quaternary structure, may form oligomeric structures.

Its subcellular location is the cytoplasm. The chain is 17.6 kDa class I heat shock protein 3 (HSP17.6C) from Arabidopsis thaliana (Mouse-ear cress).